Reading from the N-terminus, the 173-residue chain is Bifunctional protein PyrR (173 aa).

Positions 93-105 match the PRPP-binding motif; that stretch reads VILVDDVLYTGRT.

Belongs to the purine/pyrimidine phosphoribosyltransferase family. PyrR subfamily. As to quaternary structure, homodimer and homohexamer; in equilibrium.

The enzyme catalyses UMP + diphosphate = 5-phospho-alpha-D-ribose 1-diphosphate + uracil. Functionally, regulates transcriptional attenuation of the pyrimidine nucleotide (pyr) operon by binding in a uridine-dependent manner to specific sites on pyr mRNA. This disrupts an antiterminator hairpin in the RNA and favors formation of a downstream transcription terminator, leading to a reduced expression of downstream genes. Also displays a weak uracil phosphoribosyltransferase activity which is not physiologically significant. The polypeptide is Bifunctional protein PyrR (Streptococcus thermophilus (strain CNRZ 1066)).